The sequence spans 434 residues: MCPCVERRAPPGVYYTPPPARTSDHVAAMPMTERRRPPYSCSSSSERRDPFHIVHKVPSGDSPYVRAKHAQLIDKDPNRAISLFWTAINAGDRVDSALKDMAVVMKQLGRSDEGIEAIKSFRYLCSFESQDSIDNLLLELYKKSGRIEEEAVLLEHKLQTLEQGMGFGGRVSRAKRVQGKHVIMTIEQEKARILGNLGWVHLQLHNYGIAEQHYRRALGLERDKNKLCNLAICLMRMSRIPEAKSLLDDVRDSPAESECGDEPFAKSYDRAVEMLAEIESKKPEADLSEKFYAGCSFVNRMKENIAPGTANKNYSDVSSSPASVRPNSAGLYTQPRRCRLFEEETRGAARKLLFGKPQPFGSEQMKILERGEEEPMKRKKLDQNMIQYLHEFVKDTADGPKSESKKSWADIAEEEEAEEEEEERLQGELKTAEM.

A disordered region spans residues 13 to 47; it reads VYYTPPPARTSDHVAAMPMTERRRPPYSCSSSSER. The Nuclear localization signal 1 motif lies at 34-37; that stretch reads RRRP. TPR repeat units follow at residues 95-131, 133-164, 191-224, and 241-274; these read DSALKDMAVVMKQLGRSDEGIEAIKSFRYLCSFESQD, IDNLLLELYKKSGRIEEEAVLLEHKLQTLEQG, ARILGNLGWVHLQLHNYGIAEQHYRRALGLERDK, and PEAKSLLDDVRDSPAESECGDEPFAKSYDRAVEM. A coiled-coil region spans residues 142–166; it reads KKSGRIEEEAVLLEHKLQTLEQGMG. The segment at 309-329 is disordered; sequence TANKNYSDVSSSPASVRPNSA. A compositionally biased stretch (polar residues) spans 310 to 326; it reads ANKNYSDVSSSPASVRP. The Nuclear localization signal 2 motif lies at 377–380; the sequence is KRKK. Basic and acidic residues predominate over residues 393-408; the sequence is VKDTADGPKSESKKSW. The disordered stretch occupies residues 393-434; it reads VKDTADGPKSESKKSWADIAEEEEAEEEEEERLQGELKTAEM. Positions 408–434 form a coiled coil; it reads WADIAEEEEAEEEEEERLQGELKTAEM. Acidic residues predominate over residues 411 to 423; that stretch reads IAEEEEAEEEEEE. The span at 424 to 434 shows a compositional bias: basic and acidic residues; the sequence is RLQGELKTAEM.

It belongs to the MS5 protein family. In terms of tissue distribution, expressed at low levels mostly in floral organs during meiosis. Also barely detectable in leaves, stems and roots.

It localises to the nucleus. Essential for male fertility, especially for microspore and pollen grain production. Involved in the regulation of cell division after male meiosis I and II to facilitate exit from meiosis and transition to G1. This Arabidopsis thaliana (Mouse-ear cress) protein is Protein POLLENLESS 3.